The primary structure comprises 506 residues: Maturase K (506 aa).

The protein belongs to the intron maturase 2 family. MatK subfamily.

It is found in the plastid. It localises to the chloroplast. In terms of biological role, usually encoded in the trnK tRNA gene intron. Probably assists in splicing its own and other chloroplast group II introns. The polypeptide is Maturase K (Rhododendron tomentosum (Marsh Labrador tea)).